We begin with the raw amino-acid sequence, 742 residues long: G2/M phase-specific E3 ubiquitin-protein ligase (742 aa).

The segment at 10-50 (SPPCVLCGWTDNCPEKYGEKRTYVEYNLTLHNYCLLMSSGI) adopts a C2HC pre-PHD-type zinc-finger fold. A PHD-type 1 zinc finger spans residues 78–127 (LMCNICRKKGASIGCVAPKCKRSYHFPCGLQKECVFQFMEDFRSYCWEHK). Residues 142-192 (QCTICLDLVEHLPLYSVLRSPCCKNTWFHRECLQYQALSAGIFFFRCAVCN) form a PHD-type 2; degenerate zinc finger. The PHD-type 3 zinc-finger motif lies at 236–285 (RCLCKNGRDYNKPDSKWEIKRCQSCGSRGTHLACSSIKSWEQNWECVECR). Residues 417–742 (KGFRQRNFRP…IRSTLRGERE (326 aa)) form the HECT domain.

It is found in the nucleus. Its subcellular location is the nucleolus. It localises to the cytoplasm. The enzyme catalyses S-ubiquitinyl-[E2 ubiquitin-conjugating enzyme]-L-cysteine + [acceptor protein]-L-lysine = [E2 ubiquitin-conjugating enzyme]-L-cysteine + N(6)-ubiquitinyl-[acceptor protein]-L-lysine.. It participates in protein modification; protein ubiquitination. Functionally, E3 ubiquitin-protein ligase which accepts ubiquitin from an E2 ubiquitin-conjugating enzyme in the form of a thioester and then directly transfers the ubiquitin to targeted substrates. Essential in early embryonic development to prevent apoptotic death. This chain is G2/M phase-specific E3 ubiquitin-protein ligase (G2E3), found in Gallus gallus (Chicken).